Consider the following 337-residue polypeptide: Ribosomal RNA small subunit methyltransferase H (337 aa).

S-adenosyl-L-methionine contacts are provided by residues 36–38 (GGH), D56, F82, D100, and Q107. The segment at 315–337 (LEERSKRIPNPQSPIPASQGDAQ) is disordered.

This sequence belongs to the methyltransferase superfamily. RsmH family.

It localises to the cytoplasm. The catalysed reaction is cytidine(1402) in 16S rRNA + S-adenosyl-L-methionine = N(4)-methylcytidine(1402) in 16S rRNA + S-adenosyl-L-homocysteine + H(+). In terms of biological role, specifically methylates the N4 position of cytidine in position 1402 (C1402) of 16S rRNA. In Xanthomonas euvesicatoria pv. vesicatoria (strain 85-10) (Xanthomonas campestris pv. vesicatoria), this protein is Ribosomal RNA small subunit methyltransferase H.